Reading from the N-terminus, the 420-residue chain is Chaperone protein dnaJ 3 (420 aa).

One can recognise a J domain in the interval 14 to 75 (KFYEILGVPK…EKREIYDQYG (62 aa)). Residues 135-219 (GTMKKLSLSR…CKGDKVIPEK (85 aa)) form a CR-type zinc finger. Residues C148, C151, C164, C167, C191, C194, C207, and C210 each contribute to the Zn(2+) site. CXXCXGXG motif repeat units follow at residues 148–155 (CSKCNGKG), 164–171 (CGGCQGSG), 191–198 (CNECKGTG), and 207–214 (CPQCKGDK). Positions 376-420 (ETTLHDVNIEDEMRRKAQAQREAYDDDDEDDDHPGGAQRVQCAQQ) are disordered. A compositionally biased stretch (basic and acidic residues) spans 377 to 390 (TTLHDVNIEDEMRR). Residue C417 is modified to Cysteine methyl ester. Residue C417 is the site of S-farnesyl cysteine attachment. A propeptide spans 418-420 (AQQ) (removed in mature form).

This sequence belongs to the DnaJ family. A/I subfamily. In terms of assembly, homodimer. Requires Zn(2+) as cofactor. In terms of processing, farnesylated. As to expression, roots, shoots, flowers, siliques and cotyledons.

It localises to the membrane. Its function is as follows. Plays a continuous role in plant development probably in the structural organization of compartments. This chain is Chaperone protein dnaJ 3 (ATJ3), found in Arabidopsis thaliana (Mouse-ear cress).